Here is a 310-residue protein sequence, read N- to C-terminus: uncharacterized protein (310 aa).

Residues 1-70 (MAGNSQRRGA…ARGRTDETET (70 aa)) are disordered. Over residues 49-62 (AAKRAKAQQRRPAR) the composition is skewed to basic residues. S-adenosyl-L-methionine-binding residues include G262, V282, and L291.

The protein belongs to the class IV-like SAM-binding methyltransferase superfamily. RNA methyltransferase TrmH family.

This is an uncharacterized protein from Mycobacterium marinum (strain ATCC BAA-535 / M).